A 478-amino-acid polypeptide reads, in one-letter code: uncharacterized protein (478 aa).

Residues 5 to 85 enclose the RRM domain; that stretch reads KRIYVGGLSS…SKLRIEEARP (81 aa). Phosphoserine occurs at positions 207 and 308.

It localises to the nucleus. Its subcellular location is the nucleolus. This is an uncharacterized protein from Schizosaccharomyces pombe (strain 972 / ATCC 24843) (Fission yeast).